The sequence spans 89 residues: Small ribosomal subunit protein bS20 (89 aa).

Residues methionine 1–arginine 12 show a composition bias toward basic residues. Residues methionine 1–threonine 26 are disordered.

It belongs to the bacterial ribosomal protein bS20 family.

In terms of biological role, binds directly to 16S ribosomal RNA. The chain is Small ribosomal subunit protein bS20 from Desulfovibrio desulfuricans (strain ATCC 27774 / DSM 6949 / MB).